We begin with the raw amino-acid sequence, 570 residues long: Serine/threonine-protein kinase flr-4 (570 aa).

One can recognise a Protein kinase domain in the interval 40 to 331 (YKYIQDLGKG…KLRIQIKKIL (292 aa)). Residues 46-54 (LGKGRFGTV) and Lys67 each bind ATP. The active-site Proton acceptor is the Asp172. The tract at residues 338 to 369 (EEETDISHPISNSNTDSSTAISHNHSNDRKVG) is disordered. Residues 346–361 (PISNSNTDSSTAISHN) show a composition bias toward polar residues. 3 helical membrane-spanning segments follow: residues 400-420 (IMQI…FLNI), 425-445 (ICYL…FLLI), and 471-491 (LIIS…CCMV). The disordered stretch occupies residues 550 to 570 (VRRNHDDYYYDESSGPANEEN).

It belongs to the protein kinase superfamily. Ser/Thr protein kinase family. As to expression, present in the intestinal cells from comma-stage embryos through the adult stage, although the intestinal expression is weaker after the L1 stage. Accumulates at the cell membrane of intestinal cells, especially the lateral membrane intervening the intestinal cells. Also detected in the muscles of the pharyngeal isthmus from the 3-fold embryonic stage, and in a pair of head neurons, which correspond to the AUA neurons, from the late L1 stage (at protein level).

It is found in the membrane. The enzyme catalyses L-seryl-[protein] + ATP = O-phospho-L-seryl-[protein] + ADP + H(+). It catalyses the reaction L-threonyl-[protein] + ATP = O-phospho-L-threonyl-[protein] + ADP + H(+). In terms of biological role, probable serine-threonine protein kinase involved in the control of defecation rhythms. Required to increase the length of defecation cycle period. Acts in a cell-functional rather than developmental aspect in the regulation of defecation rhythms. Prevents preferential activation of the p38 MAPK pathway in response to the levels of vitamin B12 in different food types during larval development, thereby regulating the expression of cytoprotective genes, modulating life span and stress tolerance. This chain is Serine/threonine-protein kinase flr-4 (flr-4), found in Caenorhabditis elegans.